The primary structure comprises 717 residues: Serine/threonine-protein kinase STE11 (717 aa).

Residues asparagine 20–aspartate 84 enclose the SAM domain. Phosphoserine is present on serine 323. A Protein kinase domain is found at tryptophan 415 to leucine 712. ATP-binding positions include isoleucine 421–valine 429 and lysine 444. Polar residues predominate over residues asparagine 452–aspartate 466. The tract at residues asparagine 452–valine 481 is disordered. Phosphoserine is present on serine 465. Residue aspartate 579 is the Proton acceptor of the active site.

Belongs to the protein kinase superfamily. STE Ser/Thr protein kinase family. MAP kinase kinase kinase subfamily. Homodimer. Interacts (via SAM domain) with STE50 (via SAM domain). Interacts with PBS2 and SHO1.

It catalyses the reaction L-seryl-[protein] + ATP = O-phospho-L-seryl-[protein] + ADP + H(+). The catalysed reaction is L-threonyl-[protein] + ATP = O-phospho-L-threonyl-[protein] + ADP + H(+). Serine/threonine protein kinase required for cell-type-specific transcription and signal transduction in yeast. It is thought that it phosphorylates the STE7 protein kinase which itself, phosphorylates the FUS3 and or KSS1 kinases. This is Serine/threonine-protein kinase STE11 (STE11) from Saccharomyces cerevisiae (strain ATCC 204508 / S288c) (Baker's yeast).